Consider the following 471-residue polypeptide: Putative ABC transporter ATP-binding protein STK_11360 (471 aa).

2 ABC transporter domains span residues 4–241 (LEIK…LEPL) and 255–470 (VILE…VIKD). ATP contacts are provided by residues 37–44 (GKSGSGKS) and 286–293 (GDNGSGKS).

This sequence belongs to the ABC transporter superfamily.

The protein localises to the cell membrane. Functionally, probably part of an ABC transporter complex. Responsible for energy coupling to the transport system. The protein is Putative ABC transporter ATP-binding protein STK_11360 of Sulfurisphaera tokodaii (strain DSM 16993 / JCM 10545 / NBRC 100140 / 7) (Sulfolobus tokodaii).